Here is a 145-residue protein sequence, read N- to C-terminus: NADH-ubiquinone oxidoreductase subunit 8 (145 aa).

4Fe-4S ferredoxin-type domains follow at residues 43 to 73 and 83 to 112; these read LRFY…VRVG and DWFT…HSLF. [4Fe-4S] cluster is bound by residues cysteine 53, cysteine 56, cysteine 59, cysteine 63, cysteine 92, cysteine 95, cysteine 98, and cysteine 102.

Belongs to the complex I 23 kDa subunit family. [4Fe-4S] cluster is required as a cofactor.

It localises to the mitochondrion. It carries out the reaction a ubiquinone + NADH + 5 H(+)(in) = a ubiquinol + NAD(+) + 4 H(+)(out). Functionally, core subunit of the mitochondrial membrane respiratory chain NADH dehydrogenase (Complex I) that is believed to belong to the minimal assembly required for catalysis. Complex I functions in the transfer of electrons from NADH to the respiratory chain. The immediate electron acceptor for the enzyme is believed to be ubiquinone. May donate electrons to ubiquinone. The polypeptide is NADH-ubiquinone oxidoreductase subunit 8 (M-ISP1) (Trypanosoma brucei brucei).